Consider the following 388-residue polypeptide: Basigin (388 aa).

Residues 1–22 (MAAALLLALAFTFLSGQGACAA) form the signal peptide. Residues 23–326 (AGFLKAPMSQ…ISLRVRSRLA (304 aa)) lie on the Extracellular side of the membrane. The 84-residue stretch at 37–120 (GGSVVLHCEA…SSDPDRNHLT (84 aa)) folds into the Ig-like domain. 3 disulfide bridges follow: Cys-44–Cys-108, Cys-157–Cys-203, and Cys-242–Cys-304. The Ig-like C2-type domain maps to 138–219 (EPGTIVTSVQ…VGRGNINVEG (82 aa)). 3 N-linked (GlcNAc...) asparagine glycosylation sites follow: Asn-160, Asn-269, and Asn-305. The Ig-like V-type domain maps to 221–320 (PRIKVGKKSE…GSARETISLR (100 aa)). The helical transmembrane segment at 327 to 347 (ALWPFLGIVAEVLVLVTIIFI) threads the bilayer. The Cytoplasmic segment spans residues 348–388 (YEKRRKPDQTLDEDDPGAAPLKGSGSHLNDKDKNVRQRNAT). The segment at 355–388 (DQTLDEDDPGAAPLKGSGSHLNDKDKNVRQRNAT) is disordered. Thr-357 is modified (phosphothreonine). At Ser-371 the chain carries Phosphoserine.

As to quaternary structure, homooligomer. Interacts with NXNL1, SLC2A1 and SLC16A1/GLUT1. Interacts with XKR8; promoting its localization at the cell membrane. Homooligomer. Interacts with SLC16A1; interaction mediates SLC16A1 targeting to the plasma membrane. Interacts with SLC16A3; interaction mediates SLC16A3 targeting to the plasma membrane. Interacts with VEGFA, KDR/VEGFR2, PPIA/CYPA, SLC16A12, SLC16A11, ATP1B2, MAG, L1CAM and AJAP1. Interacts with PPIL2; regulates BSG transport to the cell membrane. In terms of assembly, interacts with SLC16A6; this interaction mediates targeting to the plasma membrane. Expressed in the skeletal muscle, liver, small intestine, kidney, testis, brain, heart and spleen. Also present in various immature cells and endothelia.

It localises to the cell membrane. It is found in the photoreceptor inner segment. The protein resides in the cell projection. The protein localises to the cilium. Its subcellular location is the photoreceptor outer segment. It localises to the endoplasmic reticulum membrane. It is found in the basolateral cell membrane. In terms of biological role, essential for normal retinal maturation and development. Acts as a retinal cell surface receptor for NXNL1 and plays an important role in NXNL1-mediated survival of retinal cone photoreceptors. In association with glucose transporter SLC16A1/GLUT1 and NXNL1, promotes retinal cone survival by enhancing aerobic glycolysis and accelerating the entry of glucose into photoreceptors. Functionally, signaling receptor for cyclophilins, essential for PPIA/CYPA and PPIB/CYPB-dependent signaling related to chemotaxis and adhesion of immune cells. Plays an important role in targeting the monocarboxylate transporters SLC16A1/GLUT1 and SLC16A3 to the plasma membrane. Acts as a coreceptor for vascular endothelial growth factor receptor 2 (KDR/VEGFR2) in endothelial cells enhancing its VEGFA-mediated activation and downstream signaling. Promotes angiogenesis through EPAS1/HIF2A-mediated up-regulation of VEGFA and KDR/VEGFR2 in endothelial cells. Plays an important role in spermatogenesis; mediates interactions between germ cells and Sertoli cell and is essential for the development/differentiation of germ cells to round spermatids. The chain is Basigin (Bsg) from Rattus norvegicus (Rat).